A 567-amino-acid polypeptide reads, in one-letter code: Adenine deaminase 2 (567 aa).

Belongs to the metallo-dependent hydrolases superfamily. Adenine deaminase family. Mn(2+) serves as cofactor.

The enzyme catalyses adenine + H2O + H(+) = hypoxanthine + NH4(+). This Oenococcus oeni (strain ATCC BAA-331 / PSU-1) protein is Adenine deaminase 2.